Here is a 157-residue protein sequence, read N- to C-terminus: 17.8 kDa class I heat shock protein (157 aa).

A sHSP domain is found at 43 to 157 (ETAAFVNTHI…PEVKAIDISG (115 aa)).

It belongs to the small heat shock protein (HSP20) family. Forms oligomeric structures.

The protein localises to the cytoplasm. This is 17.8 kDa class I heat shock protein from Daucus carota (Wild carrot).